A 262-amino-acid chain; its full sequence is Cytochrome c oxidase subunit 3 (262 aa).

A run of 7 helical transmembrane segments spans residues 11–31 (LVEP…LTVG), 32–52 (LVMW…VMIV), 83–103 (GMVL…WAFF), 125–147 (LNAF…TVTW), 160–180 (AIQS…LQAW), 198–218 (FFVA…FLMV), and 240–260 (AWYW…IYWW).

This sequence belongs to the cytochrome c oxidase subunit 3 family. As to quaternary structure, component of the cytochrome c oxidase (complex IV, CIV), a multisubunit enzyme composed of a catalytic core of 3 subunits and several supernumerary subunits. The complex exists as a monomer or a dimer and forms supercomplexes (SCs) in the inner mitochondrial membrane with ubiquinol-cytochrome c oxidoreductase (cytochrome b-c1 complex, complex III, CIII).

The protein localises to the mitochondrion inner membrane. It catalyses the reaction 4 Fe(II)-[cytochrome c] + O2 + 8 H(+)(in) = 4 Fe(III)-[cytochrome c] + 2 H2O + 4 H(+)(out). In terms of biological role, component of the cytochrome c oxidase, the last enzyme in the mitochondrial electron transport chain which drives oxidative phosphorylation. The respiratory chain contains 3 multisubunit complexes succinate dehydrogenase (complex II, CII), ubiquinol-cytochrome c oxidoreductase (cytochrome b-c1 complex, complex III, CIII) and cytochrome c oxidase (complex IV, CIV), that cooperate to transfer electrons derived from NADH and succinate to molecular oxygen, creating an electrochemical gradient over the inner membrane that drives transmembrane transport and the ATP synthase. Cytochrome c oxidase is the component of the respiratory chain that catalyzes the reduction of oxygen to water. Electrons originating from reduced cytochrome c in the intermembrane space (IMS) are transferred via the dinuclear copper A center (CU(A)) of subunit 2 and heme A of subunit 1 to the active site in subunit 1, a binuclear center (BNC) formed by heme A3 and copper B (CU(B)). The BNC reduces molecular oxygen to 2 water molecules using 4 electrons from cytochrome c in the IMS and 4 protons from the mitochondrial matrix. The chain is Cytochrome c oxidase subunit 3 (COIII) from Branchiostoma floridae (Florida lancelet).